Here is a 120-residue protein sequence, read N- to C-terminus: Small ribosomal subunit protein uS13 (120 aa).

The tract at residues 97 to 120 (PVRGQRTKTNARTRKGKKKTVGAK) is disordered.

It belongs to the universal ribosomal protein uS13 family. Part of the 30S ribosomal subunit. Forms a loose heterodimer with protein S19. Forms two bridges to the 50S subunit in the 70S ribosome.

Its function is as follows. Located at the top of the head of the 30S subunit, it contacts several helices of the 16S rRNA. In the 70S ribosome it contacts the 23S rRNA (bridge B1a) and protein L5 of the 50S subunit (bridge B1b), connecting the 2 subunits; these bridges are implicated in subunit movement. Contacts the tRNAs in the A and P-sites. In Nitratiruptor sp. (strain SB155-2), this protein is Small ribosomal subunit protein uS13.